Here is a 163-residue protein sequence, read N- to C-terminus: Single-stranded DNA-binding protein 2 (163 aa).

An SSB domain is found at 1–104; it reads MINNVVLVGR…VVADNFQMLE (104 aa). Positions 109-163 are disordered; sequence REGGSTGSFNGGFNNNTSSSNSYSAPAQQTPNFGRDDSPFGNSNPMDISDDDLPF. Residues 119–130 are compositionally biased toward low complexity; the sequence is GGFNNNTSSSNS. The span at 131-140 shows a compositional bias: polar residues; the sequence is YSAPAQQTPN. Positions 158–163 match the Important for interaction with partner proteins motif; that stretch reads DDDLPF.

As to quaternary structure, homotetramer.

In terms of biological role, plays an important role in DNA replication, recombination and repair. Binds to ssDNA and to an array of partner proteins to recruit them to their sites of action during DNA metabolism. The sequence is that of Single-stranded DNA-binding protein 2 (ssb2) from Streptococcus pyogenes serotype M18 (strain MGAS8232).